Here is a 432-residue protein sequence, read N- to C-terminus: Glutamyl-tRNA reductase (432 aa).

Substrate is bound by residues 55–58 (TCNR), Ser114, 119–121 (ETQ), and Gln125. The active-site Nucleophile is Cys56. 194 to 199 (GAGEMI) is a binding site for NADP(+).

This sequence belongs to the glutamyl-tRNA reductase family. In terms of assembly, homodimer.

It catalyses the reaction (S)-4-amino-5-oxopentanoate + tRNA(Glu) + NADP(+) = L-glutamyl-tRNA(Glu) + NADPH + H(+). It functions in the pathway porphyrin-containing compound metabolism; protoporphyrin-IX biosynthesis; 5-aminolevulinate from L-glutamyl-tRNA(Glu): step 1/2. In terms of biological role, catalyzes the NADPH-dependent reduction of glutamyl-tRNA(Glu) to glutamate 1-semialdehyde (GSA). This Burkholderia pseudomallei (strain 1710b) protein is Glutamyl-tRNA reductase.